The sequence spans 215 residues: Porin MspC (215 aa).

An N-terminal signal peptide occupies residues 1 to 31; the sequence is MKAISRVLIAMISALAAAVAGLFVSAGTSHA.

This sequence belongs to the mycobacterial porin (TC 1.B.24) family. Octamers. Probably forms a goblet with the wide end on the exterior of the outer membrane and a central channel. It is not known if mixed oligomers of MspC with other Msp subunits form in vivo.

The protein localises to the cell outer membrane. Its subcellular location is the secreted. It localises to the cell wall. A constitutively expressed secondary porin, forms a water-filled channel which favors the permeation of cations and less efficiently phosphate. There are about 2400 porins in wild-type, 800 in an mspA deletion and 150 in a double mspA-mspC deletion. In Mycolicibacterium smegmatis (strain ATCC 700084 / mc(2)155) (Mycobacterium smegmatis), this protein is Porin MspC (mspC).